A 196-amino-acid chain; its full sequence is UPF0314 protein Oant_0840 (196 aa).

The next 4 helical transmembrane spans lie at Trp-15 to Phe-35, Trp-65 to Ala-85, Phe-127 to Ile-147, and Leu-151 to Ile-171.

Belongs to the UPF0314 family.

It localises to the cell membrane. This is UPF0314 protein Oant_0840 from Brucella anthropi (strain ATCC 49188 / DSM 6882 / CCUG 24695 / JCM 21032 / LMG 3331 / NBRC 15819 / NCTC 12168 / Alc 37) (Ochrobactrum anthropi).